Consider the following 92-residue polypeptide: Small ribosomal subunit protein uS19 (92 aa).

It belongs to the universal ribosomal protein uS19 family.

Its function is as follows. Protein S19 forms a complex with S13 that binds strongly to the 16S ribosomal RNA. This chain is Small ribosomal subunit protein uS19, found in Shewanella halifaxensis (strain HAW-EB4).